The primary structure comprises 667 residues: Bicarbonate transport ATP-binding protein CmpC (667 aa).

One can recognise an ABC transporter domain in the interval 5–239 (VAVDNIDKVF…RPRKRMEVVE (235 aa)). 42–49 (GHSGCGKS) serves as a coordination point for ATP. A cmpA-like region spans residues 281–667 (LELGYVPLVA…DNPTPAPVFA (387 aa)).

It belongs to the ABC transporter superfamily. Nitrate/nitrite/cyanate uptake transporter (NitT) (TC 3.A.1.16) family. In terms of assembly, the complex is composed of two ATP-binding proteins (CmpC and CmpD), a transmembrane protein (CmpB) and a solute-binding protein (CmpA).

Its subcellular location is the cell inner membrane. Functionally, part of the ABC transporter complex CmpABCD involved in bicarbonate transport. Responsible for energy coupling to the transport system. This is Bicarbonate transport ATP-binding protein CmpC (cmpC) from Synechocystis sp. (strain ATCC 27184 / PCC 6803 / Kazusa).